The sequence spans 126 residues: Large ribosomal subunit protein bL12 (126 aa).

Belongs to the bacterial ribosomal protein bL12 family. In terms of assembly, homodimer. Part of the ribosomal stalk of the 50S ribosomal subunit. Forms a multimeric L10(L12)X complex, where L10 forms an elongated spine to which 2 to 4 L12 dimers bind in a sequential fashion. Binds GTP-bound translation factors.

Functionally, forms part of the ribosomal stalk which helps the ribosome interact with GTP-bound translation factors. Is thus essential for accurate translation. This is Large ribosomal subunit protein bL12 from Methylobacterium sp. (strain 4-46).